A 341-amino-acid polypeptide reads, in one-letter code: Glycerol-3-phosphate dehydrogenase [NAD(P)+] (341 aa).

NADPH-binding residues include Ser15, Trp16, Arg36, and Lys110. Sn-glycerol 3-phosphate contacts are provided by Lys110, Gly139, and Ser141. Ala143 is an NADPH binding site. Residues Lys194, Asp247, Ser257, Arg258, and Asn259 each contribute to the sn-glycerol 3-phosphate site. The active-site Proton acceptor is Lys194. Arg258 serves as a coordination point for NADPH. Residues Val282 and Glu284 each contribute to the NADPH site.

The protein belongs to the NAD-dependent glycerol-3-phosphate dehydrogenase family.

The protein resides in the cytoplasm. The catalysed reaction is sn-glycerol 3-phosphate + NAD(+) = dihydroxyacetone phosphate + NADH + H(+). The enzyme catalyses sn-glycerol 3-phosphate + NADP(+) = dihydroxyacetone phosphate + NADPH + H(+). It participates in membrane lipid metabolism; glycerophospholipid metabolism. Its function is as follows. Catalyzes the reduction of the glycolytic intermediate dihydroxyacetone phosphate (DHAP) to sn-glycerol 3-phosphate (G3P), the key precursor for phospholipid synthesis. This chain is Glycerol-3-phosphate dehydrogenase [NAD(P)+], found in Stenotrophomonas maltophilia (strain R551-3).